Here is a 278-residue protein sequence, read N- to C-terminus: Putative pyruvate, phosphate dikinase regulatory protein (278 aa).

156 to 163 (GVSRTSKT) lines the ADP pocket.

It belongs to the pyruvate, phosphate/water dikinase regulatory protein family. PDRP subfamily.

It carries out the reaction N(tele)-phospho-L-histidyl/L-threonyl-[pyruvate, phosphate dikinase] + ADP = N(tele)-phospho-L-histidyl/O-phospho-L-threonyl-[pyruvate, phosphate dikinase] + AMP + H(+). The catalysed reaction is N(tele)-phospho-L-histidyl/O-phospho-L-threonyl-[pyruvate, phosphate dikinase] + phosphate + H(+) = N(tele)-phospho-L-histidyl/L-threonyl-[pyruvate, phosphate dikinase] + diphosphate. Its function is as follows. Bifunctional serine/threonine kinase and phosphorylase involved in the regulation of the pyruvate, phosphate dikinase (PPDK) by catalyzing its phosphorylation/dephosphorylation. The chain is Putative pyruvate, phosphate dikinase regulatory protein from Lactobacillus acidophilus (strain ATCC 700396 / NCK56 / N2 / NCFM).